A 464-amino-acid chain; its full sequence is GDNF family receptor alpha-2 (464 aa).

An N-terminal signal peptide occupies residues Met-1 to Ala-21. 14 disulfide bridges follow: Cys-40-Cys-93, Cys-47-Cys-53, Cys-63-Cys-78, Cys-95-Cys-105, Cys-161-Cys-222, Cys-168-Cys-174, Cys-185-Cys-200, Cys-195-Cys-241, Cys-224-Cys-229, Cys-251-Cys-323, Cys-258-Cys-264, Cys-275-Cys-293, Cys-285-Cys-347, and Cys-325-Cys-335. Residue Asn-52 is glycosylated (N-linked (GlcNAc...) asparagine). An N-linked (GlcNAc...) asparagine glycan is attached at Asn-357. Positions Asp-360 to Gln-374 are enriched in polar residues. Residues Asp-360–Thr-392 form a disordered region. Over residues Thr-381–Thr-392 the composition is skewed to low complexity. The N-linked (GlcNAc...) asparagine glycan is linked to Asn-413. A lipid anchor (GPI-anchor amidated asparagine) is attached at Asn-440. Positions Ser-441–Leu-464 are cleaved as a propeptide — removed in mature form.

This sequence belongs to the GDNFR family. As to quaternary structure, interacts with NRTN ligand and RET: forms a 2:2:2 ternary complex composed of NRTN ligand, GFRA2 and RET receptor. Also forms a 4:4:4 tetrameric complex composed of 4 copies of NRTN ligand, GFRA2 and RET receptor, which prevents endocytosis of RET. Interacts with SORL1.

Its subcellular location is the cell membrane. Its function is as follows. Receptor for neurturin (NRTN), a growth factor that supports the survival of sympathetic neurons. NRTN-binding leads to autophosphorylation and activation of the RET receptor. Also able to mediate GDNF signaling through the RET tyrosine kinase receptor. The sequence is that of GDNF family receptor alpha-2 (GFRA2) from Bos taurus (Bovine).